The primary structure comprises 143 residues: Monothiol glutaredoxin-5, mitochondrial (143 aa).

The transit peptide at 1 to 28 directs the protein to the mitochondrion; sequence MFGRISTRALLRPAFTHRIPSVSLSRFL. The 106-residue stretch at 33–138 folds into the Glutaredoxin domain; the sequence is KQAIESAIES…KLLEDADALV (106 aa). Lys50 provides a ligand contact to glutathione. Residue Cys58 coordinates [2Fe-2S] cluster. Glutathione-binding positions include 90-94, Ile102, and 115-116; these read REGVK and CD.

Belongs to the glutaredoxin family. Monothiol subfamily. As to quaternary structure, homodimer.

The protein localises to the mitochondrion matrix. Monothiol glutaredoxin involved in mitochondrial iron-sulfur (Fe/S) cluster transfer. Receives iron-sulfur clusters from scaffold protein ISU1 and mediates their transfer to apoproteins, to the 4Fe/FS cluster biosynthesis machinery, or export from mitochondrion. This is Monothiol glutaredoxin-5, mitochondrial (GRX5) from Lachancea kluyveri (Yeast).